A 164-amino-acid polypeptide reads, in one-letter code: MD-2-related lipid-recognition protein 3 (164 aa).

The signal sequence occupies residues 1-24 (MAMSHVQPMLLLLVSLFFLPALRG).

In terms of assembly, interacts with RUB1/NEDD8. In terms of processing, neddylated. Post-translationally, ubiquitinated.

Its subcellular location is the vacuole. It is found in the endoplasmic reticulum. Functionally, may be involved in herbivory-mediated responses. May play a role in herbivory-associated molecular pattern (HAMP) recognition. May function is jasmonate (JA) signaling in response to HAMP. May play a role in defense response against the pathogens Altenaria brassicicola and Pseudomonas syringae. The protein is MD-2-related lipid-recognition protein 3 of Arabidopsis thaliana (Mouse-ear cress).